The chain runs to 284 residues: MTAQILDGKATAAAIKSDLTARVAALKEKGVTPGLGTILVGDDPGSQKYVAGKHRDCAQVGIASIQRELPATATQEEIEAAVRELNEDPACTGYIVQLPLPKGIDENRILELMDPDKDADGLHPMNLGRLVLNEPAPLPCTPNGVLTLLRRYGVEIKGAEVVVVGRGVTIGRPMPLLLTRRSENATVTQCHTGTRDLSSHLKRADIIVAAAGSAHLIRPEDVKPGAAVLDVGVSRSAEGKIVGDVHPGVAEVAGWISPNPGGVGPMTRAQLLVNVVEAAERSVG.

NADP(+) is bound by residues 165–167, Thr192, and Val233; that span reads GRG.

The protein belongs to the tetrahydrofolate dehydrogenase/cyclohydrolase family. Homodimer.

The catalysed reaction is (6R)-5,10-methylene-5,6,7,8-tetrahydrofolate + NADP(+) = (6R)-5,10-methenyltetrahydrofolate + NADPH. The enzyme catalyses (6R)-5,10-methenyltetrahydrofolate + H2O = (6R)-10-formyltetrahydrofolate + H(+). Its pathway is one-carbon metabolism; tetrahydrofolate interconversion. In terms of biological role, catalyzes the oxidation of 5,10-methylenetetrahydrofolate to 5,10-methenyltetrahydrofolate and then the hydrolysis of 5,10-methenyltetrahydrofolate to 10-formyltetrahydrofolate. The sequence is that of Bifunctional protein FolD 2 from Streptomyces avermitilis (strain ATCC 31267 / DSM 46492 / JCM 5070 / NBRC 14893 / NCIMB 12804 / NRRL 8165 / MA-4680).